The sequence spans 355 residues: Aromatic amino acid aminotransferase (355 aa).

Position 217 is an N6-(pyridoxal phosphate)lysine (lysine 217).

This sequence belongs to the class-II pyridoxal-phosphate-dependent aminotransferase family. As to quaternary structure, homodimer. It depends on pyridoxal 5'-phosphate as a cofactor.

It catalyses the reaction an aromatic L-alpha-amino acid + 2-oxoglutarate = an aromatic oxo-acid + L-glutamate. Aminotransferase that catalyzes the conversion of aromatic amino acids and 2-oxoglutarate into corresponding aromatic oxo acids and L-glutamate. This Mycolicibacterium paratuberculosis (strain ATCC BAA-968 / K-10) (Mycobacterium paratuberculosis) protein is Aromatic amino acid aminotransferase.